A 61-amino-acid chain; its full sequence is Large ribosomal subunit protein bL28 (61 aa).

This sequence belongs to the bacterial ribosomal protein bL28 family.

This Lachnospira eligens (strain ATCC 27750 / DSM 3376 / VPI C15-48 / C15-B4) (Eubacterium eligens) protein is Large ribosomal subunit protein bL28.